We begin with the raw amino-acid sequence, 80 residues long: UPF0291 protein LCA_1274 (80 aa).

Residues 59 to 80 (EGKEVTPEKVKDIQREKGLRDD) are disordered.

This sequence belongs to the UPF0291 family.

The protein resides in the cytoplasm. The sequence is that of UPF0291 protein LCA_1274 from Latilactobacillus sakei subsp. sakei (strain 23K) (Lactobacillus sakei subsp. sakei).